A 453-amino-acid chain; its full sequence is Mogroside IIIx synthase (453 aa).

The Proton acceptor role is filled by H21. D122 serves as the catalytic Charge relay. Residues S273, Q336, W354, N355, S356, E359, D375, and Q376 each coordinate UDP-alpha-D-glucose.

This sequence belongs to the UDP-glycosyltransferase family. As to expression, highly expressed in mature fruits.

The catalysed reaction is mogroside IIE + UDP-alpha-D-glucose = mogroside IIIX + UDP + H(+). It catalyses the reaction mogroside III + UDP-alpha-D-glucose = mogroside IV + UDP + H(+). The enzyme catalyses mogroside III + UDP-alpha-D-glucose = siamenoside I + UDP + H(+). It carries out the reaction mogroside IV + UDP-alpha-D-glucose = mogroside V + UDP + H(+). It participates in secondary metabolite biosynthesis; terpenoid biosynthesis. Functionally, UDP-glycosyltransferase involved in the biosynthesis of cucurbitacin and mogroside tetracyclic triterpene natural products (e.g. siamenoside I and mogrosides IV, V and VI). Cucurbitacins have cytotoxic properties and exhibit deterrent taste as a defense barrier against herbivores. Mogrosides are nonsugar highly oxygenated compounds used as high-intensity zero-calorie sweeteners; they also possess pharmacological properties such as regulating immunity, lowering blood sugar and lipid levels, protecting the liver, and acting as antioxidants and antitumor agents. Catalyzes the branched glucosylations of mogroside II-E, mogroside III and mogroside IV. The protein is Mogroside IIIx synthase of Siraitia grosvenorii (Monk's fruit).